We begin with the raw amino-acid sequence, 241 residues long: Probable transcriptional regulatory protein Maqu_2154 (241 aa).

The protein belongs to the TACO1 family.

Its subcellular location is the cytoplasm. The chain is Probable transcriptional regulatory protein Maqu_2154 from Marinobacter nauticus (strain ATCC 700491 / DSM 11845 / VT8) (Marinobacter aquaeolei).